The chain runs to 259 residues: Protein LEAD-SENSITIVE 1 (259 aa).

In terms of domain architecture, LRAT spans 20-168; sequence YSWRTAYIYA…CKTALLVLEG (149 aa). Residues histidine 30 and histidine 42 contribute to the active site. Residue cysteine 152 is the Acyl-thioester intermediate of the active site.

In terms of tissue distribution, highly expressed in inflorescences, siliques and stems, and, to a lower extent, in roots and leaves.

The protein localises to the cytoplasm. Confers tolerance to lead ions (Pb) stress mediated by Pb(NO(3))(2) probably by promoting Pb accumulation leading to subsequent glutathione-dependent phytochelatin (PC) synthesis and related gene expression, including PDR12/ABCG40, GSH1, GSH2, GR1, GR2, PCS1 and PCS2. The chain is Protein LEAD-SENSITIVE 1 from Arabidopsis thaliana (Mouse-ear cress).